The chain runs to 237 residues: Orotidine 5'-phosphate decarboxylase (237 aa).

Substrate is bound by residues Asp11, Lys34, 61-70 (DLKLHDIPNT), Thr124, Arg186, Gln195, Gly215, and Arg216. Lys63 acts as the Proton donor in catalysis.

It belongs to the OMP decarboxylase family. Type 1 subfamily. As to quaternary structure, homodimer.

The catalysed reaction is orotidine 5'-phosphate + H(+) = UMP + CO2. It functions in the pathway pyrimidine metabolism; UMP biosynthesis via de novo pathway; UMP from orotate: step 2/2. Its function is as follows. Catalyzes the decarboxylation of orotidine 5'-monophosphate (OMP) to uridine 5'-monophosphate (UMP). This Lactococcus lactis subsp. cremoris (strain SK11) protein is Orotidine 5'-phosphate decarboxylase.